The primary structure comprises 315 residues: Outer membrane protease IcsP (315 aa).

An N-terminal signal peptide occupies residues 1-20; sequence MKLKFFVLALCVPAIFTTHA. Catalysis depends on residues Asp103, Asp105, Asp230, and His232.

The protein belongs to the peptidase A26 family.

It localises to the cell outer membrane. Protease responsible for the cleavage of IcsA between 'Arg-758' and 'Arg-759', removing the entire alpha domain from IscA localized on the bacterial surface. This proteolytic activity contributes to the maintenance of a tight polar cap of IcsA, which is important to Shigella actin-based motility. This Shigella flexneri protein is Outer membrane protease IcsP (icsP).